The primary structure comprises 192 residues: Elongation factor P (192 aa).

K38 carries the N6-(3,6-diaminohexanoyl)-5-hydroxylysine modification.

It belongs to the elongation factor P family. Post-translationally, may be beta-lysylated on the epsilon-amino group of Lys-38 by the combined action of EpmA and EpmB, and then hydroxylated on the C5 position of the same residue by EpmC (if this protein is present). Lysylation is critical for the stimulatory effect of EF-P on peptide-bond formation. The lysylation moiety may extend toward the peptidyltransferase center and stabilize the terminal 3-CCA end of the tRNA. Hydroxylation of the C5 position on Lys-38 may allow additional potential stabilizing hydrogen-bond interactions with the P-tRNA.

It localises to the cytoplasm. It functions in the pathway protein biosynthesis; polypeptide chain elongation. In terms of biological role, involved in peptide bond synthesis. Alleviates ribosome stalling that occurs when 3 or more consecutive Pro residues or the sequence PPG is present in a protein, possibly by augmenting the peptidyl transferase activity of the ribosome. Modification of Lys-38 is required for alleviation. The polypeptide is Elongation factor P (Mannheimia succiniciproducens (strain KCTC 0769BP / MBEL55E)).